The following is a 348-amino-acid chain: Hereditary hemochromatosis protein homolog (348 aa).

The signal sequence occupies residues 1–22 (MGPRARPALFFLILLRTVAAQG). Residues 23–114 (RPPRSHSLRY…IMDNHNHSKE (92 aa)) form an alpha-1 region. At 23-306 (RPPRSHSLRY…WEPSLSNTLV (284 aa)) the chain is on the extracellular side. Residues N110, N130, and N234 are each glycosylated (N-linked (GlcNAc...) asparagine). The interval 115–205 (SHTLQVILGC…ELGRGVLDQQ (91 aa)) is alpha-2. Intrachain disulfides connect C124/C187 and C225/C282. Positions 206-297 (VPPLVKVTHH…GLDQPLTATW (92 aa)) are alpha-3. The 90-residue stretch at 207–296 (PPLVKVTHHV…PGLDQPLTAT (90 aa)) folds into the Ig-like C1-type domain. The interval 298–306 (EPSLSNTLV) is connecting peptide. A helical transmembrane segment spans residues 307–330 (TGVISGIAVCVIIFLIGILFRILR). The Cytoplasmic portion of the chain corresponds to 331-348 (KRQASRGAMGDYVLAECE).

Belongs to the MHC class I family. As to quaternary structure, binds TFR through the extracellular domain in a pH-dependent manner.

It is found in the cell membrane. Its function is as follows. Binds to transferrin receptor (TFR) and reduces its affinity for iron-loaded transferrin. This chain is Hereditary hemochromatosis protein homolog (HFE), found in Dicerorhinus sumatrensis (Sumatran rhinoceros).